Here is a 217-residue protein sequence, read N- to C-terminus: Ras-related protein RABA2d (217 aa).

19–26 serves as a coordination point for GTP; that stretch reads GDSGVGKT. The Effector region signature appears at 41-49; the sequence is SKSTIGVEF. Residues 67–71, 125–128, and 155–156 each bind GTP; these read DTAGQ, NKAD, and SA. The disordered stretch occupies residues 196-217; it reads GQGTTINVEDTSGAGKRGCCST. 2 S-geranylgeranyl cysteine lipidation sites follow: Cys-214 and Cys-215.

It belongs to the small GTPase superfamily. Rab family. In terms of tissue distribution, expressed in root tips.

It localises to the endosome membrane. The protein localises to the golgi apparatus. Its subcellular location is the trans-Golgi network membrane. Intracellular vesicle trafficking and protein transport. The protein is Ras-related protein RABA2d (RABA2D) of Arabidopsis thaliana (Mouse-ear cress).